Reading from the N-terminus, the 568-residue chain is Protein OCTOPUS-like (568 aa).

7 disordered regions span residues M1–T27, L78–F99, E168–P203, Q242–S276, P360–S428, D446–G512, and R526–H558. A compositionally biased stretch (low complexity) spans S82 to G93. Residues E168–G179 are compositionally biased toward acidic residues. A compositionally biased stretch (basic and acidic residues) spans E180–E193. Position 260 is a phosphoserine (S260). Residues S400–N423 are compositionally biased toward polar residues. Residues G532–W546 are compositionally biased toward gly residues.

The protein belongs to the OCTOPUS family. Post-translationally, phosphorylation at Ser-260 amplifies the promotion of protophloem differentiation.

It is found in the cell membrane. The protein resides in the cytoplasm. Its function is as follows. Potentiates primary root protophloem differentiation. Regulates roots architecture. The polypeptide is Protein OCTOPUS-like (Arabidopsis thaliana (Mouse-ear cress)).